The primary structure comprises 350 residues: tRNA uridine(34) hydroxylase (350 aa).

In terms of domain architecture, Rhodanese spans Asp146 to Leu240. Cys200 serves as the catalytic Cysteine persulfide intermediate. A compositionally biased stretch (basic and acidic residues) spans Arg319–Gly328. The disordered stretch occupies residues Arg319 to Glu350.

Belongs to the TrhO family.

The catalysed reaction is uridine(34) in tRNA + AH2 + O2 = 5-hydroxyuridine(34) in tRNA + A + H2O. In terms of biological role, catalyzes oxygen-dependent 5-hydroxyuridine (ho5U) modification at position 34 in tRNAs. This Salmonella heidelberg (strain SL476) protein is tRNA uridine(34) hydroxylase.